A 277-amino-acid chain; its full sequence is MENNETSVDAKSIKNLETQTIHGSKSMDSGKYLDNSYKMDYPEMGLCIIINNKNFHKNTGMSSRSGTDVNAANLGETFMNLKYEVRNKNDLTREEIMELMYNVSKEDHSKRSSFICVILSHGDEGVIYGTNGPIELKKLTSFFRGDYCRSLTGKPKLFIIQACRGTELDSGIETDSGVDYDMACQKIPVEADFLYAYSTAPGYYSWRNSEEGSWFIQSLCAMLKEYAHKLEFMHILTRVNRKVATEFESYSLDATFHAKKQIPCIVSMLTKELYFYH.

Met1 bears the N-acetylmethionine mark. Propeptides lie at residues 1–9 and 10–28; these read MENNETSVD and AKSI…KSMD. Lys11 carries the N6-acetyllysine modification. Ser26 carries the post-translational modification Phosphoserine. Residues His121 and Cys163 contribute to the active site. An S-nitrosocysteine; in inhibited form modification is found at Cys163.

Belongs to the peptidase C14A family. In terms of assembly, heterotetramer that consists of two anti-parallel arranged heterodimers, each one formed by a 17 kDa (p17) and a 12 kDa (p12) subunit. Interacts with BIRC6/bruce. Post-translationally, cleavage by granzyme B, caspase-6, caspase-8 and caspase-10 generates the two active subunits. Additional processing of the propeptides is likely due to the autocatalytic activity of the activated protease. Active heterodimers between the small subunit of caspase-7 protease and the large subunit of caspase-3 also occur and vice versa. In terms of processing, S-nitrosylated on its catalytic site cysteine in unstimulated cell lines and denitrosylated upon activation of the Fas apoptotic pathway, associated with an increase in intracellular caspase activity. Fas therefore activates caspase-3 not only by inducing the cleavage of the caspase zymogen to its active subunits, but also by stimulating the denitrosylation of its active site thiol. Ubiquitinated by BIRC6; this activity is inhibited by DIABLO/SMAC.

It localises to the cytoplasm. The enzyme catalyses Strict requirement for an Asp residue at positions P1 and P4. It has a preferred cleavage sequence of Asp-Xaa-Xaa-Asp-|- with a hydrophobic amino-acid residue at P2 and a hydrophilic amino-acid residue at P3, although Val or Ala are also accepted at this position.. With respect to regulation, inhibited by BIRC6; following inhibition of BIRC6-caspase binding by DIABLO/SMAC, BIRC6 is subjected to caspase cleavage, leading to an increase in active caspases. Involved in the activation cascade of caspases responsible for apoptosis execution. At the onset of apoptosis, it proteolytically cleaves poly(ADP-ribose) polymerase PARP1 at a '216-Asp-|-Gly-217' bond. Cleaves and activates sterol regulatory element binding proteins (SREBPs) between the basic helix-loop-helix leucine zipper domain and the membrane attachment domain. Cleaves and activates caspase-6, -7 and -9 (CASP6, CASP7 and CASP9, respectively). Cleaves and inactivates interleukin-18 (IL18). Triggers cell adhesion in sympathetic neurons through RET cleavage. Cleaves IL-1 beta between an Asp and an Ala, releasing the mature cytokine which is involved in a variety of inflammatory processes. Cleaves and inhibits serine/threonine-protein kinase AKT1 in response to oxidative stress. Acts as an inhibitor of type I interferon production during virus-induced apoptosis by mediating cleavage of antiviral proteins CGAS, IRF3 and MAVS, thereby preventing cytokine overproduction. Also involved in pyroptosis by mediating cleavage and activation of gasdermin-E (GSDME). Cleaves XRCC4 and phospholipid scramblase proteins XKR4, XKR8 and XKR9, leading to promote phosphatidylserine exposure on apoptotic cell surface. Cleaves BIRC6 following inhibition of BIRC6-caspase binding by DIABLO/SMAC. In Oryctolagus cuniculus (Rabbit), this protein is Caspase-3 (CASP3).